Reading from the N-terminus, the 411-residue chain is cAMP-dependent protein kinase regulatory subunit (411 aa).

The segment at 1 to 144 is disordered; it reads MAESAFPSAQ…SWTPPYHEKT (144 aa). Positions 23–159 are dimerization and phosphorylation; sequence AAFQKISEED…RLKTAVSSNF (137 aa). Residues 46 to 58 are compositionally biased toward low complexity; it reads SANAAAASSSTGS. Over residues 85–96 the composition is skewed to acidic residues; it reads EEDEEGADEFPP. Residues 119-136 show a composition bias toward polar residues; that stretch reads TSVSAESLNPTSAGSDSW. Serine 120 carries the post-translational modification Phosphoserine. 3',5'-cyclic AMP-binding positions include 160–289, glutamate 238, arginine 247, 292–411, glutamate 359, and arginine 368; these read LFSH…FLEE and LLSS…PVPA.

Belongs to the cAMP-dependent kinase regulatory chain family. In terms of assembly, tetramer, composed of 2 regulatory (R) and 2 catalytic (C) subunits. In the presence of cAMP it dissociates into 2 active monomeric C subunits and an R dimer.

This Aspergillus niger protein is cAMP-dependent protein kinase regulatory subunit (pkaR).